Here is a 211-residue protein sequence, read N- to C-terminus: ATP phosphoribosyltransferase (211 aa).

This sequence belongs to the ATP phosphoribosyltransferase family. Short subfamily. As to quaternary structure, heteromultimer composed of HisG and HisZ subunits.

The protein localises to the cytoplasm. It catalyses the reaction 1-(5-phospho-beta-D-ribosyl)-ATP + diphosphate = 5-phospho-alpha-D-ribose 1-diphosphate + ATP. It participates in amino-acid biosynthesis; L-histidine biosynthesis; L-histidine from 5-phospho-alpha-D-ribose 1-diphosphate: step 1/9. Its function is as follows. Catalyzes the condensation of ATP and 5-phosphoribose 1-diphosphate to form N'-(5'-phosphoribosyl)-ATP (PR-ATP). Has a crucial role in the pathway because the rate of histidine biosynthesis seems to be controlled primarily by regulation of HisG enzymatic activity. In Pseudomonas aeruginosa (strain UCBPP-PA14), this protein is ATP phosphoribosyltransferase.